We begin with the raw amino-acid sequence, 384 residues long: FAD-dependent urate hydroxylase (384 aa).

FAD-binding positions include Gly-11, 30 to 31 (EA), Ser-43, and Val-125. Residues Asn-178, Arg-204, and 216-218 (YFF) contribute to the substrate site. FAD is bound by residues Asp-285 and 295–299 (GQGGC).

It belongs to the FAD-dependent urate hydroxylase family. In terms of assembly, monomer. The cofactor is FAD.

The catalysed reaction is urate + NADH + O2 + H(+) = 5-hydroxyisourate + NAD(+) + H2O. The protein operates within purine metabolism; urate degradation. Catalyzes the hydroxylation of urate to 5-hydroxyisourate (HIU). This is FAD-dependent urate hydroxylase from Klebsiella pneumoniae subsp. pneumoniae (strain ATCC 700721 / MGH 78578).